A 1377-amino-acid polypeptide reads, in one-letter code: Hemoglobin-binding protease hbp autotransporter (1377 aa).

The signal sequence occupies residues 1–52 (MNRIYSLRYSAVARGFIAVSEFARKCVHKSVRRLCFPVLLLIPVLFSAGSLA). In terms of domain architecture, Peptidase S6 spans 53–302 (GTVNNELGYQ…AVIPLDFIGQ (250 aa)). Residues His125, Asp153, and Ser259 each act as charge relay system in the active site. Residues 1111–1377 (DINGEAGTWV…AINANIRYSF (267 aa)) form the Autotransporter domain.

Cleaved to release the mature protein from the outer membrane.

It localises to the periplasm. The protein resides in the secreted. Its subcellular location is the cell surface. The protein localises to the cell outer membrane. Protease activity is inhibited by 3,4-dichloroisocoumarin. Functionally, interacts with hemoglobin, degrades it and subsequently binds the released heme. Could make heme accessible not only for E.coli, but also for B.fragilis during mixed intra-abdominal infections. Has a role in abscess formation. This is Hemoglobin-binding protease hbp autotransporter (hbp) from Escherichia coli.